A 439-amino-acid polypeptide reads, in one-letter code: UPF0229 protein Nham_0975 (439 aa).

The disordered stretch occupies residues 39 to 106; that stretch reads RSGRISDADG…AGTPDPSMKD (68 aa). Over residues 58 to 76 the composition is skewed to basic and acidic residues; sequence STDEPRFEAAKDSGRREHV.

The protein belongs to the UPF0229 family.

This chain is UPF0229 protein Nham_0975, found in Nitrobacter hamburgensis (strain DSM 10229 / NCIMB 13809 / X14).